The primary structure comprises 395 residues: S-adenosylmethionine synthase (395 aa).

Histidine 15 contributes to the ATP binding site. Aspartate 17 is a Mg(2+) binding site. Residue glutamate 43 participates in K(+) binding. Positions 56 and 99 each coordinate L-methionine. Residues 99-109 are flexible loop; the sequence is QSPDIAMGVDE. ATP contacts are provided by residues 173–175, 239–240, aspartate 248, 254–255, alanine 271, and lysine 275; these read DGK, RF, and RK. Aspartate 248 is an L-methionine binding site. Lysine 279 is a binding site for L-methionine.

It belongs to the AdoMet synthase family. In terms of assembly, homotetramer; dimer of dimers. Mg(2+) serves as cofactor. It depends on K(+) as a cofactor.

Its subcellular location is the cytoplasm. It carries out the reaction L-methionine + ATP + H2O = S-adenosyl-L-methionine + phosphate + diphosphate. The protein operates within amino-acid biosynthesis; S-adenosyl-L-methionine biosynthesis; S-adenosyl-L-methionine from L-methionine: step 1/1. Functionally, catalyzes the formation of S-adenosylmethionine (AdoMet) from methionine and ATP. The overall synthetic reaction is composed of two sequential steps, AdoMet formation and the subsequent tripolyphosphate hydrolysis which occurs prior to release of AdoMet from the enzyme. The protein is S-adenosylmethionine synthase of Desulforudis audaxviator (strain MP104C).